The chain runs to 427 residues: Enolase (427 aa).

Residue Q163 participates in (2R)-2-phosphoglycerate binding. The active-site Proton donor is E205. 3 residues coordinate Mg(2+): D242, E288, and D315. (2R)-2-phosphoglycerate contacts are provided by K340, R369, S370, and K391. K340 functions as the Proton acceptor in the catalytic mechanism.

Belongs to the enolase family. It depends on Mg(2+) as a cofactor.

It is found in the cytoplasm. It localises to the secreted. The protein resides in the cell surface. The catalysed reaction is (2R)-2-phosphoglycerate = phosphoenolpyruvate + H2O. It participates in carbohydrate degradation; glycolysis; pyruvate from D-glyceraldehyde 3-phosphate: step 4/5. Functionally, catalyzes the reversible conversion of 2-phosphoglycerate (2-PG) into phosphoenolpyruvate (PEP). It is essential for the degradation of carbohydrates via glycolysis. In Amoebophilus asiaticus (strain 5a2), this protein is Enolase.